The following is a 61-amino-acid chain: MSDKKVTITQVRSMIGCTKKQKATIKALGLRRPNNKVEKPDNPCTRGQIRVVQHLVKVEEQ.

The protein belongs to the universal ribosomal protein uL30 family. In terms of assembly, part of the 50S ribosomal subunit.

The sequence is that of Large ribosomal subunit protein uL30 from Chlorobium phaeobacteroides (strain BS1).